We begin with the raw amino-acid sequence, 159 residues long: NAD(P)H-quinone oxidoreductase subunit J, chloroplastic (159 aa).

Belongs to the complex I 30 kDa subunit family. As to quaternary structure, NDH is composed of at least 16 different subunits, 5 of which are encoded in the nucleus.

It is found in the plastid. The protein localises to the chloroplast thylakoid membrane. The enzyme catalyses a plastoquinone + NADH + (n+1) H(+)(in) = a plastoquinol + NAD(+) + n H(+)(out). It catalyses the reaction a plastoquinone + NADPH + (n+1) H(+)(in) = a plastoquinol + NADP(+) + n H(+)(out). NDH shuttles electrons from NAD(P)H:plastoquinone, via FMN and iron-sulfur (Fe-S) centers, to quinones in the photosynthetic chain and possibly in a chloroplast respiratory chain. The immediate electron acceptor for the enzyme in this species is believed to be plastoquinone. Couples the redox reaction to proton translocation, and thus conserves the redox energy in a proton gradient. The sequence is that of NAD(P)H-quinone oxidoreductase subunit J, chloroplastic from Oryza nivara (Indian wild rice).